The primary structure comprises 699 residues: Elongation factor G (699 aa).

One can recognise a tr-type G domain in the interval N10–T292. GTP contacts are provided by residues A19–T26, D90–H94, and N144–D147. The tract at residues T292–S312 is disordered.

This sequence belongs to the TRAFAC class translation factor GTPase superfamily. Classic translation factor GTPase family. EF-G/EF-2 subfamily.

Its subcellular location is the cytoplasm. Its function is as follows. Catalyzes the GTP-dependent ribosomal translocation step during translation elongation. During this step, the ribosome changes from the pre-translocational (PRE) to the post-translocational (POST) state as the newly formed A-site-bound peptidyl-tRNA and P-site-bound deacylated tRNA move to the P and E sites, respectively. Catalyzes the coordinated movement of the two tRNA molecules, the mRNA and conformational changes in the ribosome. The protein is Elongation factor G of Coxiella burnetii (strain RSA 331 / Henzerling II).